The sequence spans 91 residues: MLGTRNIPTTSGLPLPPPSSSLSAYIFPTILAIIFAVFALVAIHITTPEPFCTIHIDGASITITNCPDPAAILNKVAIGPWRGLSYHNNLK.

Residues 1-23 lie on the Lumenal side of the membrane; the sequence is MLGTRNIPTTSGLPLPPPSSSLS. Residues 24–46 traverse the membrane as a helical segment; it reads AYIFPTILAIIFAVFALVAIHIT. Topologically, residues 47–91 are cytoplasmic; it reads TPEPFCTIHIDGASITITNCPDPAAILNKVAIGPWRGLSYHNNLK.

This sequence belongs to the Tymovirales TGBp3 protein family.

The protein localises to the host endoplasmic reticulum membrane. In terms of biological role, plays a role in viral cell-to-cell propagation, by facilitating genome transport to neighboring plant cells through plasmosdesmata. May induce the formation of granular vesicles derived from the Endoplasmic reticulum, which align on actin filaments. In Cymbidium mosaic virus (strain Singapore), this protein is Movement protein TGBp3.